A 393-amino-acid chain; its full sequence is Putative B3 domain-containing protein Os06g0632500 (393 aa).

3 DNA-binding regions (TF-B3) span residues 27-123 (LSVP…FDPG), 141-238 (RPRF…FLQN), and 316-393 (NSFT…VQRR).

The protein localises to the nucleus. The polypeptide is Putative B3 domain-containing protein Os06g0632500 (Oryza sativa subsp. japonica (Rice)).